A 436-amino-acid chain; its full sequence is UBX domain-containing protein 7 (436 aa).

Residue Lys-19 forms a Glycyl lysine isopeptide (Lys-Gly) (interchain with G-Cter in ubiquitin) linkage. The disordered stretch occupies residues 115-141; that stretch reads AGESSSRETNPGLAREEKSSRDVHRKN. Residues 212-290 form the UBX domain; it reads LHSSKCVLQI…ELTPRSALLL (79 aa). Positions 325–346 are enriched in basic and acidic residues; the sequence is DKDPEVTSQREETSKPNRHEVR. 2 disordered regions span residues 325–357 and 371–436; these read DKDPEVTSQREETSKPNRHEVRSSTPLSGAASS and SSAH…EDKK. The segment covering 347–357 has biased composition (low complexity); sequence SSTPLSGAASS. Residues 371 to 408 show a composition bias toward polar residues; it reads SSAHASPMLTPSGTRYPSETNLTTSRSVSPNVFQFVNN. Ser-388 bears the Phosphoserine mark. Residues 426-436 are compositionally biased toward basic and acidic residues; it reads HLEKKKDEDKK.

In terms of assembly, interacts with CDC48.

The protein resides in the endoplasmic reticulum. In terms of biological role, involved in CDC48-dependent protein degradation through the ubiquitin/proteasome pathway. In Saccharomyces cerevisiae (strain ATCC 204508 / S288c) (Baker's yeast), this protein is UBX domain-containing protein 7 (UBX7).